A 267-amino-acid polypeptide reads, in one-letter code: Alpha carbonic anhydrase 4 (267 aa).

The first 26 residues, 1–26 (MDTNAKTIFFMAMCFIYLSFPNISHA), serve as a signal peptide directing secretion. N22 carries an N-linked (GlcNAc...) asparagine glycan. In terms of domain architecture, Alpha-carbonic anhydrase spans 34–264 (TPFTYEQKTE…SKGRSVWFYD (231 aa)). Cysteines 59 and 214 form a disulfide. The Proton acceptor role is filled by H99. Zn(2+)-binding residues include H125 and H127. N-linked (GlcNAc...) asparagine glycosylation occurs at N135. Zn(2+) is bound at residue H144. 210–211 (TV) lines the substrate pocket.

This sequence belongs to the alpha-class carbonic anhydrase family. The cofactor is Zn(2+). Post-translationally, N-glycosylated.

Its subcellular location is the plastid. It localises to the chloroplast stroma. It carries out the reaction hydrogencarbonate + H(+) = CO2 + H2O. Its function is as follows. Reversible hydration of carbon dioxide. This is Alpha carbonic anhydrase 4 (ACA4) from Arabidopsis thaliana (Mouse-ear cress).